A 603-amino-acid polypeptide reads, in one-letter code: Glutamyl-tRNA(Gln) amidotransferase subunit B, mitochondrial (603 aa).

2 disordered regions span residues 38–61 (RGRDWSSTSRRAIDTQTSGASNGA) and 72–91 (EQAREGRAATRKGEVSPPEH). Positions 42-58 (WSSTSRRAIDTQTSGAS) are enriched in polar residues.

It belongs to the GatB/GatE family. GatB subfamily. In terms of assembly, subunit of the heterotrimeric GatCAB amidotransferase (AdT) complex, composed of A, B and C subunits.

Its subcellular location is the mitochondrion. It carries out the reaction L-glutamyl-tRNA(Gln) + L-glutamine + ATP + H2O = L-glutaminyl-tRNA(Gln) + L-glutamate + ADP + phosphate + H(+). Functionally, allows the formation of correctly charged Gln-tRNA(Gln) through the transamidation of misacylated Glu-tRNA(Gln) in the mitochondria. The reaction takes place in the presence of glutamine and ATP through an activated gamma-phospho-Glu-tRNA(Gln). The chain is Glutamyl-tRNA(Gln) amidotransferase subunit B, mitochondrial from Paracoccidioides brasiliensis (strain Pb18).